A 417-amino-acid polypeptide reads, in one-letter code: Biofilm dispersion protein BdlA (417 aa).

The region spanning 1-66 (MAALDRSMAR…RRFWERLRRG (66 aa)) is the PAS 1 domain. Residues 67-114 (EHFSGRCKRITREGRPLWLEATYNPVRDGQGRLLKVVKYASDIDAIVH) form the PAC 1 domain. Residues 115-188 (QEHEMQSKLD…ADLWRRLNRG (74 aa)) form the PAS 2 domain. In terms of domain architecture, PAC 2 spans 191 to 241 (VTGQFRRVHRNGQPVWLEASYNPVYDADGKLYKVVKFASDVSDRMRRYQAE). Positions 242–417 (ADNAHQAHTL…QFSRTLNADL (176 aa)) constitute a Methyl-accepting transducer domain.

Its function is as follows. Essential for biofilm dispersion by sensing environmental cues. May be involved in sensing and transducing signals within cells, resulting in the modulation of c-di-GMP levels, swimming motility and adhesiveness of the bacterial cell surface. This Pseudomonas aeruginosa (strain ATCC 15692 / DSM 22644 / CIP 104116 / JCM 14847 / LMG 12228 / 1C / PRS 101 / PAO1) protein is Biofilm dispersion protein BdlA (bdlA).